Reading from the N-terminus, the 61-residue chain is Metallothionein-1 (61 aa).

Position 1 is an N-acetylmethionine (M1). The tract at residues 1–29 (MDPNCSCATGVSCTCADSCKCKECKCTSC) is beta. 20 residues coordinate a divalent metal cation: C5, C7, C13, C15, C19, C21, C24, C26, C29, C33, C34, C36, C37, C41, C44, C48, C50, C57, C59, and C60. The interval 30-61 (KKSCCSCCPVGCAKCAQGCVCKGASEKCNCCA) is alpha.

It belongs to the metallothionein superfamily. Type 1 family.

In terms of biological role, metallothioneins have a high content of cysteine residues that bind various heavy metals; these proteins are transcriptionally regulated by both heavy metals and glucocorticoids. This is Metallothionein-1 (MT1) from Chlorocebus aethiops (Green monkey).